The following is a 431-amino-acid chain: Phosphomethylpyrimidine synthase (431 aa).

Substrate contacts are provided by residues Asn-66, Met-95, Tyr-124, His-163, 185–187 (SRG), 226–229 (DGLR), and Glu-265. His-269 is a Zn(2+) binding site. Tyr-292 provides a ligand contact to substrate. His-333 serves as a coordination point for Zn(2+). The [4Fe-4S] cluster site is built by Cys-408, Cys-411, and Cys-415.

Belongs to the ThiC family. [4Fe-4S] cluster serves as cofactor.

The catalysed reaction is 5-amino-1-(5-phospho-beta-D-ribosyl)imidazole + S-adenosyl-L-methionine = 4-amino-2-methyl-5-(phosphooxymethyl)pyrimidine + CO + 5'-deoxyadenosine + formate + L-methionine + 3 H(+). The protein operates within cofactor biosynthesis; thiamine diphosphate biosynthesis. In terms of biological role, catalyzes the synthesis of the hydroxymethylpyrimidine phosphate (HMP-P) moiety of thiamine from aminoimidazole ribotide (AIR) in a radical S-adenosyl-L-methionine (SAM)-dependent reaction. This chain is Phosphomethylpyrimidine synthase, found in Dehalococcoides mccartyi (strain ATCC BAA-2100 / JCM 16839 / KCTC 5957 / BAV1).